The following is a 206-amino-acid chain: Large ribosomal subunit protein uL4 (206 aa).

The segment at 48–97 (THAVKNRSLVSGGGKKPWKQKHTGRARQGSTRASQWVGGGKAMGPKPRDY) is disordered. Basic residues predominate over residues 63–72 (KPWKQKHTGR).

It belongs to the universal ribosomal protein uL4 family. In terms of assembly, part of the 50S ribosomal subunit.

Functionally, one of the primary rRNA binding proteins, this protein initially binds near the 5'-end of the 23S rRNA. It is important during the early stages of 50S assembly. It makes multiple contacts with different domains of the 23S rRNA in the assembled 50S subunit and ribosome. Its function is as follows. Forms part of the polypeptide exit tunnel. The chain is Large ribosomal subunit protein uL4 from Anaeromyxobacter sp. (strain K).